Reading from the N-terminus, the 376-residue chain is Chaperone protein DnaJ (376 aa).

The 65-residue stretch at 5 to 69 (DYYEVLGISK…QKRAQYDQYG (65 aa)) folds into the J domain. The CR-type zinc-finger motif lies at 133-215 (GKDAEIEIPR…CHGKGRVTKT (83 aa)). Zn(2+) is bound by residues cysteine 146, cysteine 149, cysteine 163, cysteine 166, cysteine 189, cysteine 192, cysteine 203, and cysteine 206. CXXCXGXG motif repeat units lie at residues 146-153 (CDTCHGSG), 163-170 (CSHCGGKG), 189-196 (CQYCNGTG), and 203-210 (CSTCHGKG).

Belongs to the DnaJ family. Homodimer. Zn(2+) is required as a cofactor.

Its subcellular location is the cytoplasm. Its function is as follows. Participates actively in the response to hyperosmotic and heat shock by preventing the aggregation of stress-denatured proteins and by disaggregating proteins, also in an autonomous, DnaK-independent fashion. Unfolded proteins bind initially to DnaJ; upon interaction with the DnaJ-bound protein, DnaK hydrolyzes its bound ATP, resulting in the formation of a stable complex. GrpE releases ADP from DnaK; ATP binding to DnaK triggers the release of the substrate protein, thus completing the reaction cycle. Several rounds of ATP-dependent interactions between DnaJ, DnaK and GrpE are required for fully efficient folding. Also involved, together with DnaK and GrpE, in the DNA replication of plasmids through activation of initiation proteins. The protein is Chaperone protein DnaJ of Listeria welshimeri serovar 6b (strain ATCC 35897 / DSM 20650 / CCUG 15529 / CIP 8149 / NCTC 11857 / SLCC 5334 / V8).